Consider the following 253-residue polypeptide: Triosephosphate isomerase (253 aa).

Position 9-11 (9-11) interacts with substrate; that stretch reads NWK. Catalysis depends on H97, which acts as the Electrophile. Catalysis depends on E169, which acts as the Proton acceptor. Substrate-binding positions include G175, S215, and 236-237; that span reads GG.

Belongs to the triosephosphate isomerase family. In terms of assembly, homodimer.

It is found in the cytoplasm. It carries out the reaction D-glyceraldehyde 3-phosphate = dihydroxyacetone phosphate. Its pathway is carbohydrate biosynthesis; gluconeogenesis. It participates in carbohydrate degradation; glycolysis; D-glyceraldehyde 3-phosphate from glycerone phosphate: step 1/1. Functionally, involved in the gluconeogenesis. Catalyzes stereospecifically the conversion of dihydroxyacetone phosphate (DHAP) to D-glyceraldehyde-3-phosphate (G3P). In Staphylococcus haemolyticus (strain JCSC1435), this protein is Triosephosphate isomerase.